The primary structure comprises 365 residues: UDP-N-acetylglucosamine--N-acetylmuramyl-(pentapeptide) pyrophosphoryl-undecaprenol N-acetylglucosamine transferase (365 aa).

Residues 17-19, asparagine 129, arginine 167, serine 194, isoleucine 250, 269-274, and glutamine 295 contribute to the UDP-N-acetyl-alpha-D-glucosamine site; these read TGG and ALTVSE.

Belongs to the glycosyltransferase 28 family. MurG subfamily.

It localises to the cell inner membrane. The catalysed reaction is di-trans,octa-cis-undecaprenyl diphospho-N-acetyl-alpha-D-muramoyl-L-alanyl-D-glutamyl-meso-2,6-diaminopimeloyl-D-alanyl-D-alanine + UDP-N-acetyl-alpha-D-glucosamine = di-trans,octa-cis-undecaprenyl diphospho-[N-acetyl-alpha-D-glucosaminyl-(1-&gt;4)]-N-acetyl-alpha-D-muramoyl-L-alanyl-D-glutamyl-meso-2,6-diaminopimeloyl-D-alanyl-D-alanine + UDP + H(+). The protein operates within cell wall biogenesis; peptidoglycan biosynthesis. Cell wall formation. Catalyzes the transfer of a GlcNAc subunit on undecaprenyl-pyrophosphoryl-MurNAc-pentapeptide (lipid intermediate I) to form undecaprenyl-pyrophosphoryl-MurNAc-(pentapeptide)GlcNAc (lipid intermediate II). The sequence is that of UDP-N-acetylglucosamine--N-acetylmuramyl-(pentapeptide) pyrophosphoryl-undecaprenol N-acetylglucosamine transferase from Shewanella piezotolerans (strain WP3 / JCM 13877).